The chain runs to 589 residues: Phenylalanine--tRNA ligase beta subunit (589 aa).

Positions Leu-302 to Met-379 constitute a B5 domain. Mg(2+) contacts are provided by Asp-357, Asp-363, Glu-366, and Asp-367.

Belongs to the phenylalanyl-tRNA synthetase beta subunit family. Type 2 subfamily. Heterotetramer; dimer of two heterodimers formed by FARSA and FARSB. It depends on Mg(2+) as a cofactor.

It localises to the cytoplasm. It catalyses the reaction tRNA(Phe) + L-phenylalanine + ATP = L-phenylalanyl-tRNA(Phe) + AMP + diphosphate + H(+). The sequence is that of Phenylalanine--tRNA ligase beta subunit (FARSB) from Homo sapiens (Human).